The primary structure comprises 504 residues: L-carnitine/gamma-butyrobetaine antiporter (504 aa).

12 helical membrane-spanning segments follow: residues 10-30, 51-71, 92-112, 143-163, 195-215, 231-251, 263-283, 316-336, 347-367, 398-418, 446-466, and 475-495; these read IEPK…WLTV, WGWA…WLVF, IFMM…SIEI, GPLP…FFFV, FYLV…TPLV, LDAI…ACGL, SYLS…SFIM, WTVF…IFLA, LCFG…TVLG, WAAL…CFIA, LLVR…LLAL, and AIIA…LSFI.

It belongs to the BCCT transporter (TC 2.A.15) family. CaiT subfamily. Homotrimer.

The protein localises to the cell inner membrane. The enzyme catalyses 4-(trimethylamino)butanoate(in) + (R)-carnitine(out) = 4-(trimethylamino)butanoate(out) + (R)-carnitine(in). It participates in amine and polyamine metabolism; carnitine metabolism. In terms of biological role, catalyzes the exchange of L-carnitine for gamma-butyrobetaine. This chain is L-carnitine/gamma-butyrobetaine antiporter, found in Escherichia coli O157:H7.